Consider the following 301-residue polypeptide: Acetylglutamate kinase (301 aa).

Residues 68 to 69 (GG), Arg-90, and Asn-195 contribute to the substrate site.

The protein belongs to the acetylglutamate kinase family. ArgB subfamily.

The protein resides in the cytoplasm. The enzyme catalyses N-acetyl-L-glutamate + ATP = N-acetyl-L-glutamyl 5-phosphate + ADP. The protein operates within amino-acid biosynthesis; L-arginine biosynthesis; N(2)-acetyl-L-ornithine from L-glutamate: step 2/4. In terms of biological role, catalyzes the ATP-dependent phosphorylation of N-acetyl-L-glutamate. This chain is Acetylglutamate kinase, found in Pseudomonas putida (strain GB-1).